Reading from the N-terminus, the 493-residue chain is Extracellular tyrosine-protein kinase PKDCC (493 aa).

Residues 1–32 (MRRRRAAVAAGFCASFLLGSVLNVLFAPGSEP) form the signal peptide. The interval 28–128 (PGSEPPRPGQ…PGPGSPGPGP (101 aa)) is disordered. Residues 30 to 46 (SEPPRPGQSPEPSPAPG) show a composition bias toward pro residues. Residues 52–69 (GRGELARQIRARYEEVQR) show a composition bias toward basic and acidic residues. Composition is skewed to pro residues over residues 95 to 105 (PGLPRPRPPWA) and 114 to 127 (GWPP…PGPG). Asparagine 137 carries N-linked (GlcNAc...) asparagine glycosylation. Residues 138 to 493 (VSGAQYMGSG…NKTTYVKASG (356 aa)) enclose the Protein kinase domain. ATP is bound by residues 144–152 (MGSGYTKAV) and lysine 166. Tyrosine 148 is modified (phosphotyrosine). Serine 177 carries the phosphoserine modification. Catalysis depends on aspartate 278, which acts as the Proton acceptor. 5 N-linked (GlcNAc...) asparagine glycosylation sites follow: asparagine 320, asparagine 369, asparagine 400, asparagine 460, and asparagine 484.

It belongs to the protein kinase superfamily. N-glycosylated. In terms of processing, phosphorylated on tyrosines; probably via autophosphorylation. Highly expressed in platelets.

It is found in the secreted. The protein localises to the golgi apparatus. It catalyses the reaction L-tyrosyl-[protein] + ATP = O-phospho-L-tyrosyl-[protein] + ADP + H(+). Functionally, secreted tyrosine-protein kinase that mediates phosphorylation of extracellular proteins and endogenous proteins in the secretory pathway, which is essential for patterning at organogenesis stages. Mediates phosphorylation of MMP1, MMP13, MMP14, MMP19 and ERP29. Probably plays a role in platelets: rapidly and quantitatively secreted from platelets in response to stimulation of platelet degranulation. May also have serine/threonine protein kinase activity. Required for longitudinal bone growth through regulation of chondrocyte differentiation. May be indirectly involved in protein transport from the Golgi apparatus to the plasma membrane. The polypeptide is Extracellular tyrosine-protein kinase PKDCC (Homo sapiens (Human)).